The sequence spans 145 residues: Peptide methionine sulfoxide reductase MsrB (145 aa).

The MsrB domain maps to 6–129 (KNERLQQLTD…NSAALRFIPV (124 aa)). The active-site Nucleophile is Cys118.

The protein belongs to the MsrB Met sulfoxide reductase family.

The enzyme catalyses L-methionyl-[protein] + [thioredoxin]-disulfide + H2O = L-methionyl-(R)-S-oxide-[protein] + [thioredoxin]-dithiol. The protein is Peptide methionine sulfoxide reductase MsrB of Listeria monocytogenes serotype 4b (strain CLIP80459).